Here is a 181-residue protein sequence, read N- to C-terminus: Achaete-scute homolog 3 (181 aa).

Residues 93 to 106 (AFTRKRNERERQRV) form a basic motif region. Residues 93-145 (AFTRKRNERERQRVKCVNEGYAQLRHHLPEEYLEKRLSKVETLRAAIKYINYL) form the bHLH domain. Residues 107–145 (KCVNEGYAQLRHHLPEEYLEKRLSKVETLRAAIKYINYL) form a helix-loop-helix motif region.

In terms of assembly, efficient DNA binding requires dimerization with another bHLH protein. In terms of tissue distribution, widely expressed in fetal and adult tissues.

It localises to the nucleus. In terms of biological role, transcriptional repressor. Inhibits myogenesis. Plays a role in progenitor cells which differentiate into ductal and acinar, but not myoepithelial, cell lineages in the salivary glands. Involved in the functions of the microvillar cells and Bowman's glands and probably, in a non-cell-autonomous manner, in the development or regeneration of a complete olfactory epithelium (OE). The sequence is that of Achaete-scute homolog 3 from Homo sapiens (Human).